The following is a 479-amino-acid chain: Calcium/calmodulin-dependent protein kinase type II delta chain (479 aa).

The Protein kinase domain maps to 14 to 272 (YQLFEELGKG…ASEALKHPWI (259 aa)). ATP is bound by residues 20-28 (LGKGAFSVV) and Lys43. The active-site Proton acceptor is Asp136. Thr287 carries the post-translational modification Phosphothreonine. A phosphoserine mark is found at Ser315 and Ser319. Residue Thr337 is modified to Phosphothreonine.

This sequence belongs to the protein kinase superfamily. CAMK Ser/Thr protein kinase family. CaMK subfamily. As to quaternary structure, CAMK2 is composed of four different chains: alpha, beta, gamma, and delta. The different isoforms assemble into homo- or heteromultimeric holoenzymes composed of 8 to 12 subunits.

It carries out the reaction L-seryl-[protein] + ATP = O-phospho-L-seryl-[protein] + ADP + H(+). The catalysed reaction is L-threonyl-[protein] + ATP = O-phospho-L-threonyl-[protein] + ADP + H(+). With respect to regulation, autophosphorylation of CAMK2 plays an important role in the regulation of the kinase activity. Functionally, caM-kinase II (CAMK2) is a prominent kinase in the central nervous system. In Gallus gallus (Chicken), this protein is Calcium/calmodulin-dependent protein kinase type II delta chain (CAMK2D).